Reading from the N-terminus, the 378-residue chain is Probable pectin lyase A (378 aa).

An N-terminal signal peptide occupies residues 1 to 18 (MKYQDLLAIAGCIANAGA). Disulfide bonds link cysteine 81-cysteine 100 and cysteine 90-cysteine 224. N-linked (GlcNAc...) asparagine glycosylation occurs at asparagine 127. Arginine 254 is an active-site residue. Residues cysteine 321 and cysteine 329 are joined by a disulfide bond.

The protein belongs to the polysaccharide lyase 1 family.

The protein localises to the secreted. It carries out the reaction Eliminative cleavage of (1-&gt;4)-alpha-D-galacturonan methyl ester to give oligosaccharides with 4-deoxy-6-O-methyl-alpha-D-galact-4-enuronosyl groups at their non-reducing ends.. Pectinolytic enzymes consist of four classes of enzymes: pectin lyase, polygalacturonase, pectin methylesterase and rhamnogalacturonase. Among pectinolytic enzymes, pectin lyase is the most important in depolymerization of pectin, since it cleaves internal glycosidic bonds of highly methylated pectins. In Aspergillus fumigatus (strain CBS 144.89 / FGSC A1163 / CEA10) (Neosartorya fumigata), this protein is Probable pectin lyase A (pelA).